Here is a 73-residue protein sequence, read N- to C-terminus: Mitofissin (73 aa).

It belongs to the ?ATG44? family. As to quaternary structure, homooligomer. Found as homooctamer in solution, but binds to membranes either as a monomer, dimer, or tetramer, not as an octamer.

Its subcellular location is the mitochondrion intermembrane space. The protein resides in the vacuole. Mitochondrial fission factor that acts directly on lipid membranes to drive mitochondrial fission required for mitophagy. Directly binds to lipid membranes and brings about lipid membrane fragility to facilitate membrane fission and engulfment of mitochondria by the phagophore. This Saccharomyces cerevisiae (strain ATCC 204508 / S288c) (Baker's yeast) protein is Mitofissin.